The chain runs to 248 residues: Prepilin leader peptidase/N-methyltransferase (248 aa).

A helical membrane pass occupies residues 1 to 21; the sequence is MLSILFIFGLILGSFYYTAGC. 4 residues coordinate Zn(2+): C36, C39, C61, and C64. The next 6 membrane-spanning stretches (helical) occupy residues 68–88, 90–110, 114–134, 143–163, 178–198, and 223–243; these read ISFM…AAGI, FGIS…IIVA, IHFM…LAAA, WYAG…IAAI, VIGF…SVLI, and AIAA…SFYI.

This sequence belongs to the peptidase A24 family. Zn(2+) is required as a cofactor.

Its subcellular location is the cell membrane. It carries out the reaction Typically cleaves a -Gly-|-Phe- bond to release an N-terminal, basic peptide of 5-8 residues from type IV prepilin, and then N-methylates the new N-terminal amino group, the methyl donor being S-adenosyl-L-methionine.. In terms of biological role, plays a role in type II pseudopili formation by proteolytically removing the leader sequence from substrate proteins and subsequently monomethylating the alpha-amino group of the newly exposed N-terminal phenylalanine. Substrates include proteins required for biogenesis of the type II general secretory apparatus. The protein is Prepilin leader peptidase/N-methyltransferase (comC) of Bacillus subtilis (strain 168).